The primary structure comprises 191 residues: Gastrokine-3 (191 aa).

The N-terminal stretch at 1 to 30 (MPLHSLERDNMRRLIAPSILVTVFLVPALA) is a signal peptide. The N-linked (GlcNAc...) asparagine glycan is linked to N33. The region spanning 63–155 (NSVQSEWDGV…LCRAVPTYFA (93 aa)) is the BRICHOS domain. Residues C90 and C147 are joined by a disulfide bond.

This sequence belongs to the gastrokine family. Expressed in stomach. Present in mucus cells at the base of antral glands, and Brunner glands of the duodenum. Present at lower levels in the mucus neck cell region of the fundus (at protein level).

Its subcellular location is the secreted. Inhibits gastric epithelial cell proliferation. In Mus musculus (Mouse), this protein is Gastrokine-3 (Gkn3).